A 195-amino-acid chain; its full sequence is MSIDRKKVEEHIRGLLVAIGENPDREGLKETPSRVAQMYQEVFEGISYTNDEIAEMFNKTFEEDLVIPKDNKEIVLVKDIDIFSYCEHHMALMYNMKVAVAYIPNDKILGLSKIARIADMVGKRLQLQERIGSDIAEIMQKITDSEDVAVIVEGQHACMTTRGIKNTGSRTTTTTLRGAFKTDTNLTNRLMMLYK.

Residues cysteine 86, histidine 89, and cysteine 158 each coordinate Zn(2+).

Belongs to the GTP cyclohydrolase I family. Homomer.

The catalysed reaction is GTP + H2O = 7,8-dihydroneopterin 3'-triphosphate + formate + H(+). Its pathway is cofactor biosynthesis; 7,8-dihydroneopterin triphosphate biosynthesis; 7,8-dihydroneopterin triphosphate from GTP: step 1/1. This is GTP cyclohydrolase 1 from Ruminiclostridium cellulolyticum (strain ATCC 35319 / DSM 5812 / JCM 6584 / H10) (Clostridium cellulolyticum).